Reading from the N-terminus, the 68-residue chain is Small integral membrane protein 10-like protein 3 (68 aa).

The polypeptide is Small integral membrane protein 10-like protein 3 (Homo sapiens (Human)).